A 408-amino-acid polypeptide reads, in one-letter code: MSEKKEARVVINDLLAEQYANAFKAKEEGRPVGWSTSVFPQELAEVFDLNVLYPENQAAGVAAKKGSLELCEIAESKGYSIDLCAYARTNFGLLENGGCEALDMPAPDFLLCCNNICNQVIKWYENISRELDIPLIMIDTTFNNEDEVTQSRIDYIKAQFEEAIKQLEIISGKKFDPKKFEEVMKISAENGRLWKYSMSLPADSSPSPMNGFDLFTYMAVIVCARGKKETTEAFKLLIEELEDNMKTGKSSFRGEEKYRIMMEGIPCWPYIGYKMKTLAKFGVNMTGSVYPHAWALQYEVNDLDGMAVAYSTMFNNVNLDRMTKYRVDSLVEGKCDGAFYHMNRSCKLMSLIQYEMQRRAAEETGLPYAGFDGDQADPRAFTNAQFETRIQGLVEVMEERKKLNRGEI.

A substrate-binding site is contributed by Glu-55. Residues Cys-84, Cys-117, and Cys-346 each coordinate [4Fe-4S] cluster.

It belongs to the FldB/FldC dehydratase alpha/beta subunit family. As to quaternary structure, part of the heterodimeric complex HadBC composed of (R)-2-hydroxyisocaproyl-CoA dehydratase alpha (HadB) and beta (HadC) subunit. The cofactor is [4Fe-4S] cluster.

The catalysed reaction is (R)-2-hydroxy-4-methylpentanoyl-CoA = 4-methylpent-2-enoyl-CoA + H2O. Its activity is regulated as follows. Activated by HadI. Functionally, involved in the reductive branch of L-leucine fermentation. Catalyzes the irreversible beta/alpha-elimination of water from (R)-2-hydroxyisocaproyl-CoA to yield isocaprenoyl-CoA. This beta/alpha-dehydration depends on the reductive formation of ketyl radicals on the substrate generated by injection of a single electron from the ATP-dependent activator protein HadI. The enzyme is specific for the R-isomer. This is (R)-2-hydroxyisocaproyl-CoA dehydratase alpha subunit from Clostridioides difficile (Peptoclostridium difficile).